We begin with the raw amino-acid sequence, 166 residues long: Ureidoglycolate lyase (166 aa).

The protein belongs to the ureidoglycolate lyase family. Homodimer. Requires Ni(2+) as cofactor.

It catalyses the reaction (S)-ureidoglycolate = urea + glyoxylate. It functions in the pathway nitrogen metabolism; (S)-allantoin degradation. Catalyzes the catabolism of the allantoin degradation intermediate (S)-ureidoglycolate, generating urea and glyoxylate. Involved in the utilization of allantoin as nitrogen source. This is Ureidoglycolate lyase from Rhizobium etli (strain CIAT 652).